The chain runs to 1020 residues: Nucleotide-binding oligomerization domain-containing protein 2 (1020 aa).

2 consecutive CARD domains span residues 6–104 (CDMC…GSWD) and 106–200 (HSLH…AECQ). Positions 43–57 (WDVLSREDYEGLSLP) match the ATG16L1-binding motif motif. ADP is bound by residues Thr219, Tyr232, Thr233, Gly282, Ser283, Gly284, Lys285, Ser286, and Thr287. Residues 221–254 (DGSENLCLEDIYTENILELQTEVGTAGALQKSPA) form a required for CARD9 binding region. The region spanning 273 to 600 (DTILVVGEAG…AAFYLAVSAD (328 aa)) is the NACHT domain. A lipid anchor (S-palmitoyl cysteine) is attached at Cys375. His583 lines the ADP pocket. 10 LRR repeats span residues 685–709 (ARAR…VPGE), 726–749 (LYEM…HLKL), 766–792 (LQHL…QLRP), 794–817 (LGVC…TLVE), 822–845 (CEQL…SMAK), 850–873 (KQNF…VLAQ), 906–929 (HQNL…ALAL), 934–962 (NKSL…LKRN), 963–985 (STLK…ALLQ), and 1005–1019 (LEEI…ARLL).

This sequence belongs to the NOD1-NOD2 family. In terms of assembly, homooligomer: homooligomerizes following muramyl dipeptide (MDP)-binding, promoting RIPK2 recruitment. Interacts (via CARD domain) with RIPK2 (via CARD domain). Following RIPK2 recruitment, RIPK2 homooligomerizes via its CARD domain and forms long filaments named RIPosomes. Interacts (via CARD domain) with ubiquitin; inhibiting interaction with RIPK2. Component of a signaling complex consisting of ARHGEF2, NOD2 and RIPK2. Interacts with ANKRD17 (via N-terminus). Interacts with HSPA1A; the interaction enhances NOD2 stability. Interacts (via both CARD domains) with HSP90; the interaction enhances NOD2 stability. Interacts (via CARD domain) with SOCS3; the interaction promotes NOD2 degradation. Interacts (via CARD domain) with ERBIN; the interaction inhibits activation of NOD2. Interacts with MAPKBP1; the interaction is enhanced in the presence of muramyl dipeptide (MDP) and inhibits NOD2 homooligomerization and activation. Interacts with INAVA; the interaction takes place upon Pattern recognition receptor (PRR) stimulation. Interacts (via NACHT domain) with CARD9. Interacts (via CARD domain) with CASP1; this interaction leads to IL1B processing. Also interacts with CASP4. Interacts with NLRP1; this interaction is enhanced in the presence of muramyl dipeptide (MDP) and leads to increased IL1B release. Interacts with NLRP12; this interaction promotes degradation of NOD2 through the ubiquitin-proteasome pathway. Interacts with ANKHD1, C10orf67, CHMP5, DOCK7, ENTR1, KRT15, LDOC1, PPP1R12C, PPP2R3B, TRIM41 and VIM. Interacts with MAVS; interaction takes place following single-stranded RNA (ssRNA)-binding. Interacts with ATG16L1. Interacts with Irgm1; promoting Irgm1 'Lys-63'-linked polyubiquitination, which is required for interactions with the core autophagy factors. Post-translationally, palmitoylated by ZDHHC5; palmitoylation is required for proper recruitment to the bacterial entry site and hence for proper signaling upon cognate peptidoglycan detection. Palmitoylation promotes localization to the cell membrane. Palmitoylation protects from SQSTM1/p62-dependent autophagic degradation. Polyubiquitinated by TRIM27, leading to proteasome-mediated degradation. Polyubiquitinated and degraded following muramyl dipeptide (MDP) stimulation, conferring MDP tolerance and preventing septic shock. In terms of processing, degraded via selective autophagy following interaction with Irgm1. Irgm1 promotes NOD2-RIPK2 RIPosome recruitment to autophagosome membranes, promoting their SQSTM1/p62-dependent autophagic degradation. Post-translationally, O-glycosylated by OGT, O-GlcNAcylation increases protein stability. Expressed in monocytes, macrophages, dendritic cells, hepatocytes, preadipocytes, epithelial cells of oral cavity, lung and intestine. In intestine, highly expressed in ileal Paneth cells of the crypt and in intestinal stem cells. Also expressed in neurons of several brain regions including the hypothalamus.

The protein localises to the cell membrane. It is found in the basolateral cell membrane. The protein resides in the cytoplasm. Its subcellular location is the mitochondrion. With respect to regulation, ADP-binding promotes an inactive closed conformation. Pattern recognition receptor (PRR) that detects bacterial peptidoglycan fragments and other danger signals and plays an important role in gastrointestinal immunity. Specifically activated by muramyl dipeptide (MDP), a fragment of bacterial peptidoglycan found in every bacterial peptidoglycan type. NOD2 specifically recognizes and binds 6-O-phospho-MDP, the phosphorylated form of MDP, which is generated by NAGK. 6-O-phospho-MDP-binding triggers oligomerization that facilitates the binding and subsequent activation of the proximal adapter receptor-interacting RIPK2. Following recruitment, RIPK2 undergoes 'Met-1'- (linear) and 'Lys-63'-linked polyubiquitination by E3 ubiquitin-protein ligases XIAP, BIRC2, BIRC3 and the LUBAC complex, becoming a scaffolding protein for downstream effectors, triggering activation of the NF-kappa-B and MAP kinases signaling. This in turn leads to the transcriptional activation of hundreds of genes involved in immune response. Its ability to detect bacterial MDP plays a central role in maintaining the equilibrium between intestinal microbiota and host immune responses to control inflammation. An imbalance in this relationship results in dysbiosis, whereby pathogenic bacteria prevail on commensals, causing damage in the intestinal epithelial barrier as well as allowing bacterial invasion and inflammation. Acts as a regulator of appetite by sensing MDP in a subset of brain neurons: microbiota-derived MDP reach the brain, where they bind and activate NOD2 in inhibitory hypothalamic neurons, decreasing neuronal activity, thereby regulating satiety and body temperature. NOD2-dependent MDP-sensing of bacterial cell walls in the intestinal epithelial compartment contributes to sustained postnatal growth upon undernutrition. Also plays a role in antiviral response by acting as a sensor of single-stranded RNA (ssRNA) from viruses: upon ssRNA-binding, interacts with MAVS, leading to activation of interferon regulatory factor-3/IRF3 and expression of type I interferon. Also acts as a regulator of autophagy in dendritic cells via its interaction with ATG16L1, possibly by recruiting ATG16L1 at the site of bacterial entry. NOD2 activation in the small intestine crypt also contributes to intestinal stem cells survival and function: acts by promoting mitophagy via its association with ATG16L1. In addition to its main role in innate immunity, also regulates the adaptive immune system by acting as regulator of helper T-cell and regulatory T-cells (Tregs). Besides recognizing pathogens, also involved in the endoplasmic reticulum stress response: acts by sensing and binding to the cytosolic metabolite sphingosine-1-phosphate generated in response to endoplasmic reticulum stress, initiating an inflammation process that leads to activation of the NF-kappa-B and MAP kinases signaling. May also be involved in NLRP1 activation following activation by MDP, leading to CASP1 activation and IL1B release in macrophages. This chain is Nucleotide-binding oligomerization domain-containing protein 2, found in Mus musculus (Mouse).